Consider the following 198-residue polypeptide: Pyridoxine/pyridoxamine 5'-phosphate oxidase (198 aa).

FMN contacts are provided by residues 47-52, 62-63, Arg-68, Lys-69, and Gln-91; these read RMVLVK and FT. Lys-52 contributes to the substrate binding site. Residues Tyr-109, Arg-113, and Ser-117 each coordinate substrate. FMN is bound by residues 126 to 127 and Trp-171; that span reads QS. 177–179 is a substrate binding site; the sequence is RLH. Position 181 (Arg-181) interacts with FMN.

Belongs to the pyridoxamine 5'-phosphate oxidase family. As to quaternary structure, homodimer. The cofactor is FMN.

It catalyses the reaction pyridoxamine 5'-phosphate + O2 + H2O = pyridoxal 5'-phosphate + H2O2 + NH4(+). It carries out the reaction pyridoxine 5'-phosphate + O2 = pyridoxal 5'-phosphate + H2O2. Its pathway is cofactor metabolism; pyridoxal 5'-phosphate salvage; pyridoxal 5'-phosphate from pyridoxamine 5'-phosphate: step 1/1. It functions in the pathway cofactor metabolism; pyridoxal 5'-phosphate salvage; pyridoxal 5'-phosphate from pyridoxine 5'-phosphate: step 1/1. Functionally, catalyzes the oxidation of either pyridoxine 5'-phosphate (PNP) or pyridoxamine 5'-phosphate (PMP) into pyridoxal 5'-phosphate (PLP). This Anaeromyxobacter dehalogenans (strain 2CP-C) protein is Pyridoxine/pyridoxamine 5'-phosphate oxidase.